Consider the following 382-residue polypeptide: Cytochrome b (382 aa).

The next 4 membrane-spanning stretches (helical) occupy residues 36-56, 80-101, 116-136, and 181-201; these read FGSL…FLTM, WLIR…YLHI, WFIG…GYVL, and FYTF…IHLL. 2 residues coordinate heme b: His86 and His100. Heme b is bound by residues His185 and His199. His204 lines the a ubiquinone pocket. The next 4 helical transmembrane spans lie at 229-249, 291-311, 323-343, and 350-370; these read YKDL…TLSN, LGGV…PLTF, INQF…WIGA, and YIIT…LNPL.

The protein belongs to the cytochrome b family. In terms of assembly, the main subunits of complex b-c1 are: cytochrome b, cytochrome c1 and the Rieske protein. Heme b serves as cofactor.

Its subcellular location is the mitochondrion inner membrane. Its function is as follows. Component of the ubiquinol-cytochrome c reductase complex (complex III or cytochrome b-c1 complex) that is part of the mitochondrial respiratory chain. The b-c1 complex mediates electron transfer from ubiquinol to cytochrome c. Contributes to the generation of a proton gradient across the mitochondrial membrane that is then used for ATP synthesis. The sequence is that of Cytochrome b (MT-CYB) from Samia ricini (Indian eri silkmoth).